We begin with the raw amino-acid sequence, 142 residues long: Crustacean hyperglycemic hormones (142 aa).

Positions 1-26 (MYSKTIPAMLAIITVAYLCALPHAHA) are cleaved as a signal peptide. Position 67 is a pyrrolidone carboxylic acid; partial (Q67). 3 cysteine pairs are disulfide-bonded: C73–C109, C89–C105, and C92–C118. V138 bears the Valine amide mark.

The protein belongs to the arthropod CHH/MIH/GIH/VIH hormone family. In terms of processing, the N-terminus is blocked only in isoform CHH-II but not in isoform CHH-I. As to expression, produced by the medulla terminalis X-organ in the eyestalks and transported to the sinus gland where they are stored and released.

The protein resides in the secreted. Functionally, hormone found in the sinus gland of isopods and decapods which controls the blood sugar level. Has a secretagogue action over the amylase released from the midgut gland. May act as a stress hormone and may be involved in the control of molting and reproduction. This is Crustacean hyperglycemic hormones from Carcinus maenas (Common shore crab).